Reading from the N-terminus, the 1578-residue chain is FERM and PDZ domain-containing protein 1 (1578 aa).

In terms of domain architecture, PDZ spans 57–135; the sequence is TVKIDKDTLL…SLSITVVRCT (79 aa). Residues 181-496 form the FERM domain; the sequence is NVLKLYLENG…GYYRLLVDPV (316 aa). 3 disordered regions span residues 555-616, 720-743, and 759-831; these read KEEQ…EEDD, SDSSESTASRQGGAPPAWGQQGWT, and PLAF…VKKY. Polar residues predominate over residues 720-729; sequence SDSSESTASR. A compositionally biased stretch (low complexity) spans 730–742; it reads QGGAPPAWGQQGW. Polar residues predominate over residues 793 to 811; that stretch reads AEPSATSLQNKASTSSPEN. Basic residues predominate over residues 822–831; the sequence is PSRRGGVKKY. Residues 924–931 form an important for interaction with GPSM2 region; it reads EPETMETK. Disordered stretches follow at residues 950-1030, 1070-1194, and 1347-1374; these read PNNK…LASN, KYTE…QGCQ, and PQPETEEEDRDLEAHPMAPLTSPPSAGS. The span at 968 to 986 shows a compositional bias: polar residues; it reads TPHCSNPGSSGPDTAQARP. Residues 1100 to 1117 are compositionally biased toward basic and acidic residues; sequence TKEEPQGQLSLERDREVT. Polar residues predominate over residues 1139–1150; the sequence is DVSNNVSQTLDI.

As to quaternary structure, interacts with GPSM1. Interacts with GPSM2 (via TPR repeat region).

Its subcellular location is the cytoplasm. It is found in the cytosol. The protein localises to the cell membrane. Stabilizes membrane-bound GPSM1, and thereby promotes its interaction with GNAI1. This Homo sapiens (Human) protein is FERM and PDZ domain-containing protein 1 (FRMPD1).